Reading from the N-terminus, the 56-residue chain is Bowman-Birk type proteinase inhibitor I-2B (56 aa).

Intrachain disulfides connect C10–C25, C15–C23, C32–C39, and C36–C51.

The protein belongs to the Bowman-Birk serine protease inhibitor family.

The sequence is that of Bowman-Birk type proteinase inhibitor I-2B from Triticum aestivum (Wheat).